Consider the following 815-residue polypeptide: 1,4-alpha-glucan branching enzyme GlgB (815 aa).

The active-site Nucleophile is the aspartate 405. Glutamate 458 serves as the catalytic Proton donor.

This sequence belongs to the glycosyl hydrolase 13 family. GlgB subfamily. Monomer.

It carries out the reaction Transfers a segment of a (1-&gt;4)-alpha-D-glucan chain to a primary hydroxy group in a similar glucan chain.. It participates in glycan biosynthesis; glycogen biosynthesis. In terms of biological role, catalyzes the formation of the alpha-1,6-glucosidic linkages in glycogen by scission of a 1,4-alpha-linked oligosaccharide from growing alpha-1,4-glucan chains and the subsequent attachment of the oligosaccharide to the alpha-1,6 position. The sequence is that of 1,4-alpha-glucan branching enzyme GlgB from Histophilus somni (strain 2336) (Haemophilus somnus).